We begin with the raw amino-acid sequence, 298 residues long: Estradiol 17-beta-dehydrogenase 11 (298 aa).

The N-terminal stretch at 1-21 (MKYLLDLILLLPLLIVFCIES) is a signal peptide. 40-64 (LITGAGHGIGRLTAYEFAKLNTKLV) contributes to the NADP(+) binding site. S172 contributes to the substrate binding site. The Proton acceptor role is filled by Y185.

The protein belongs to the short-chain dehydrogenases/reductases (SDR) family. 17-beta-HSD 3 subfamily.

It localises to the endoplasmic reticulum. The protein resides in the lipid droplet. It carries out the reaction 17beta-estradiol + NAD(+) = estrone + NADH + H(+). The enzyme catalyses 17beta-estradiol + NADP(+) = estrone + NADPH + H(+). Functionally, can convert androstan-3-alpha,17-beta-diol (3-alpha-diol) to androsterone in vitro, suggesting that it may participate in androgen metabolism during steroidogenesis. May act by metabolizing compounds that stimulate steroid synthesis and/or by generating metabolites that inhibit it. Has no activity toward DHEA (dehydroepiandrosterone), or A-dione (4-androste-3,17-dione), and only a slight activity toward testosterone to A-dione. The protein is Estradiol 17-beta-dehydrogenase 11 (Hsd17b11) of Rattus norvegicus (Rat).